A 146-amino-acid polypeptide reads, in one-letter code: uncharacterized protein (146 aa).

Residues 6–26 (IPIFVISLSNISHIILAIFFF) form a helical membrane-spanning segment.

The protein localises to the membrane. This is an uncharacterized protein from Caenorhabditis elegans.